We begin with the raw amino-acid sequence, 1072 residues long: Carbamoyl phosphate synthase large chain (1072 aa).

Positions 1 to 401 (MPKRLDINTI…SLLKAVRSLE (401 aa)) are carboxyphosphate synthetic domain. ATP-binding residues include arginine 129, arginine 169, glycine 175, glycine 176, lysine 208, isoleucine 210, glutamate 215, glycine 241, valine 242, histidine 243, glutamine 284, and glutamate 298. Positions 133–327 (RTLMQDLNEP…IAKLAAKIAV (195 aa)) constitute an ATP-grasp 1 domain. The Mg(2+) site is built by glutamine 284, glutamate 298, and asparagine 300. Mn(2+) contacts are provided by glutamine 284, glutamate 298, and asparagine 300. Residues 402 to 546 (LGIYHLELDH…YSTYADENES (145 aa)) are oligomerization domain. The carbamoyl phosphate synthetic domain stretch occupies residues 547-929 (IVTDRKSVVV…ALYKGLVASG (383 aa)). Residues 671–861 (EAALTKLGIP…MANVATKVIL (191 aa)) enclose the ATP-grasp 2 domain. Residues arginine 707, arginine 746, glutamate 752, glycine 777, valine 778, histidine 779, serine 780, glutamine 820, and glutamate 832 each coordinate ATP. Residues glutamine 820, glutamate 832, and asparagine 834 each contribute to the Mg(2+) site. Positions 820, 832, and 834 each coordinate Mn(2+). In terms of domain architecture, MGS-like spans 930–1072 (INIPTHGSVI…QTKRHEVVHA (143 aa)). The interval 930–1072 (INIPTHGSVI…QTKRHEVVHA (143 aa)) is allosteric domain.

The protein belongs to the CarB family. As to quaternary structure, composed of two chains; the small (or glutamine) chain promotes the hydrolysis of glutamine to ammonia, which is used by the large (or ammonia) chain to synthesize carbamoyl phosphate. Tetramer of heterodimers (alpha,beta)4. The cofactor is Mg(2+). Requires Mn(2+) as cofactor.

The enzyme catalyses hydrogencarbonate + L-glutamine + 2 ATP + H2O = carbamoyl phosphate + L-glutamate + 2 ADP + phosphate + 2 H(+). It catalyses the reaction hydrogencarbonate + NH4(+) + 2 ATP = carbamoyl phosphate + 2 ADP + phosphate + 2 H(+). Its pathway is amino-acid biosynthesis; L-arginine biosynthesis; carbamoyl phosphate from bicarbonate: step 1/1. It participates in pyrimidine metabolism; UMP biosynthesis via de novo pathway; (S)-dihydroorotate from bicarbonate: step 1/3. Its function is as follows. Large subunit of the glutamine-dependent carbamoyl phosphate synthetase (CPSase). CPSase catalyzes the formation of carbamoyl phosphate from the ammonia moiety of glutamine, carbonate, and phosphate donated by ATP, constituting the first step of 2 biosynthetic pathways, one leading to arginine and/or urea and the other to pyrimidine nucleotides. The large subunit (synthetase) binds the substrates ammonia (free or transferred from glutamine from the small subunit), hydrogencarbonate and ATP and carries out an ATP-coupled ligase reaction, activating hydrogencarbonate by forming carboxy phosphate which reacts with ammonia to form carbamoyl phosphate. The polypeptide is Carbamoyl phosphate synthase large chain (Bacillus cereus (strain B4264)).